The sequence spans 240 residues: MAVPGVRLLTGALRKPDAWTRLWGVIQGTSSHKLCASWNRYLYFSSTKLNTSNYKTLFRNIFSLRLPELLVSPECYFPFSIRLKSNINSKKSTKKTLQKEADEEDSDEETSYPERSEQEEELESEPGVAKDYKDLEKVVQSFRYDVILKTGLDVGRNKVEDAFYKGELRLNGEKLWKKSRTVKVGDTLDLITGENKETGTEVVMRILLKKVYEEKTENDKHRVVLRRWKSLKLPKKTLSK.

The transit peptide at 1–83 (MAVPGVRLLT…ECYFPFSIRL (83 aa)) directs the protein to the mitochondrion. Positions 92–127 (STKKTLQKEADEEDSDEETSYPERSEQEEELESEPG) are disordered. Acidic residues predominate over residues 101–124 (ADEEDSDEETSYPERSEQEEELES). 2 positions are modified to phosphoserine: S106 and S116. An S4 RNA-binding domain is found at 142–217 (FRYDVILKTG…LKKVYEEKTE (76 aa)).

In terms of assembly, monomer. Interacts with POLRMT. Interacts (via S4 domain) with MTRFR (via C-terminus). Associates with mitoribosomal S39 large subunit, peptidyl tRNA and nascent chain.

The protein resides in the mitochondrion matrix. Its function is as follows. Mitochondrial RNA-binding protein involved in mitochondrial transcription regulation. Functions as a protective factor to maintain proper mitochondrial RNA level during stress. Acts at the transcription level and its protective function depends on its RNA binding ability. Part of a mitoribosome-associated quality control pathway that prevents aberrant translation by responding to interruptions during elongation. As heterodimer with MTRF, ejects the unfinished nascent chain and peptidyl transfer RNA (tRNA), respectively, from stalled ribosomes. Recruitment of mitoribosome biogenesis factors to these quality control intermediates suggests additional roles for MTRES1 and MTRF during mitoribosome rescue. This is Mitochondrial transcription rescue factor 1 (Mtres1) from Mus musculus (Mouse).